A 156-amino-acid chain; its full sequence is Aspartate carbamoyltransferase regulatory chain (156 aa).

Zn(2+) is bound by residues cysteine 107, cysteine 112, cysteine 137, and cysteine 140.

Belongs to the PyrI family. As to quaternary structure, contains catalytic and regulatory chains. Zn(2+) is required as a cofactor.

In terms of biological role, involved in allosteric regulation of aspartate carbamoyltransferase. This chain is Aspartate carbamoyltransferase regulatory chain, found in Methanopyrus kandleri (strain AV19 / DSM 6324 / JCM 9639 / NBRC 100938).